The following is a 37-amino-acid chain: Cytochrome b6-f complex subunit 5 (37 aa).

A helical transmembrane segment spans residues 5–25 (LLSGIVLGLIPITLAGLFVTA).

This sequence belongs to the PetG family. In terms of assembly, the 4 large subunits of the cytochrome b6-f complex are cytochrome b6, subunit IV (17 kDa polypeptide, PetD), cytochrome f and the Rieske protein, while the 4 small subunits are PetG, PetL, PetM and PetN. The complex functions as a dimer.

It localises to the plastid. The protein localises to the chloroplast thylakoid membrane. In terms of biological role, component of the cytochrome b6-f complex, which mediates electron transfer between photosystem II (PSII) and photosystem I (PSI), cyclic electron flow around PSI, and state transitions. PetG is required for either the stability or assembly of the cytochrome b6-f complex. This Cryptomeria japonica (Japanese cedar) protein is Cytochrome b6-f complex subunit 5.